The primary structure comprises 334 residues: Trans-1,2-dihydrobenzene-1,2-diol dehydrogenase (334 aa).

Belongs to the Gfo/Idh/MocA family. Homodimer.

It carries out the reaction (1R,2R)-1,2-dihydrobenzene-1,2-diol + NADP(+) = catechol + NADPH + H(+). The enzyme catalyses D-xylose + NADP(+) = D-xylono-1,5-lactone + NADPH + H(+). The chain is Trans-1,2-dihydrobenzene-1,2-diol dehydrogenase (dhdh) from Danio rerio (Zebrafish).